The primary structure comprises 248 residues: tRNA pseudouridine synthase A (248 aa).

Residue Asp53 is the Nucleophile of the active site. Tyr111 provides a ligand contact to substrate.

This sequence belongs to the tRNA pseudouridine synthase TruA family. In terms of assembly, homodimer.

The enzyme catalyses uridine(38/39/40) in tRNA = pseudouridine(38/39/40) in tRNA. Its function is as follows. Formation of pseudouridine at positions 38, 39 and 40 in the anticodon stem and loop of transfer RNAs. The sequence is that of tRNA pseudouridine synthase A from Listeria monocytogenes serotype 4a (strain HCC23).